Consider the following 282-residue polypeptide: 2-dehydro-3-deoxyphosphooctonate aldolase (282 aa).

It belongs to the KdsA family.

It localises to the cytoplasm. It catalyses the reaction D-arabinose 5-phosphate + phosphoenolpyruvate + H2O = 3-deoxy-alpha-D-manno-2-octulosonate-8-phosphate + phosphate. Its pathway is carbohydrate biosynthesis; 3-deoxy-D-manno-octulosonate biosynthesis; 3-deoxy-D-manno-octulosonate from D-ribulose 5-phosphate: step 2/3. The protein operates within bacterial outer membrane biogenesis; lipopolysaccharide biosynthesis. The polypeptide is 2-dehydro-3-deoxyphosphooctonate aldolase (Shewanella sp. (strain W3-18-1)).